A 149-amino-acid polypeptide reads, in one-letter code: NPC intracellular cholesterol transporter 2 (149 aa).

Residues 1-19 (MRFLAATILLLALVAASQA) form the signal peptide. 3 cysteine pairs are disulfide-bonded: Cys-27/Cys-140, Cys-42/Cys-47, and Cys-93/Cys-99. N-linked (GlcNAc...) asparagine glycans are attached at residues Asn-58 and Asn-69. Lys-116 is modified (N6-acetyllysine).

This sequence belongs to the NPC2 family. In terms of assembly, interacts with NPC1 (via the second lumenal domain) in a cholestrol-dependent manner. Interacts with NUS1/NgBR, the interaction stabilizes NCP2 and regulates cholesterol trafficking. Interacts with DHDDS. Interacts with NEDD4L (via C2 domain). Interacts with NPC1L1. N-glycosylated. In terms of tissue distribution, detected in liver and bile. Detected in epididymis (at protein level). Detected in caput epididymis, corpus epididymis, cauda epididymis and ovary.

It is found in the secreted. Its subcellular location is the endoplasmic reticulum. The protein resides in the lysosome. It catalyses the reaction cholesterol(in) = cholesterol(out). Functionally, intracellular cholesterol transporter which acts in concert with NPC1 and plays an important role in the egress of cholesterol from the lysosomal compartment. Unesterified cholesterol that has been released from LDLs in the lumen of the late endosomes/lysosomes is transferred by NPC2 to the cholesterol-binding pocket in the N-terminal domain of NPC1. May bind and mobilize cholesterol that is associated with membranes. NPC2 binds cholesterol with a 1:1 stoichiometry. Can bind a variety of sterols, including lathosterol, desmosterol and the plant sterols stigmasterol and beta-sitosterol. The secreted form of NCP2 regulates biliary cholesterol secretion via stimulation of ABCG5/ABCG8-mediated cholesterol transport. This chain is NPC intracellular cholesterol transporter 2, found in Mus musculus (Mouse).